The chain runs to 211 residues: Octanoyltransferase (211 aa).

The BPL/LPL catalytic domain maps to 28 to 203 (GSAPETLLLV…HFQSLLKTWL (176 aa)). Substrate contacts are provided by residues 66-73 (RGGDITYH), 133-135 (SIG), and 146-148 (GFA). Cysteine 164 serves as the catalytic Acyl-thioester intermediate.

This sequence belongs to the LipB family.

The protein resides in the cytoplasm. It carries out the reaction octanoyl-[ACP] + L-lysyl-[protein] = N(6)-octanoyl-L-lysyl-[protein] + holo-[ACP] + H(+). It functions in the pathway protein modification; protein lipoylation via endogenous pathway; protein N(6)-(lipoyl)lysine from octanoyl-[acyl-carrier-protein]: step 1/2. Its function is as follows. Catalyzes the transfer of endogenously produced octanoic acid from octanoyl-acyl-carrier-protein onto the lipoyl domains of lipoate-dependent enzymes. Lipoyl-ACP can also act as a substrate although octanoyl-ACP is likely to be the physiological substrate. The sequence is that of Octanoyltransferase from Syntrophotalea carbinolica (strain DSM 2380 / NBRC 103641 / GraBd1) (Pelobacter carbinolicus).